An 800-amino-acid polypeptide reads, in one-letter code: Ribosome-releasing factor 2, mitochondrial (800 aa).

The 287-residue stretch at serine 21–serine 307 folds into the tr-type G domain. Residues alanine 30–threonine 37, aspartate 95–histidine 99, and asparagine 147–aspartate 150 each bind GTP.

This sequence belongs to the TRAFAC class translation factor GTPase superfamily. Classic translation factor GTPase family. EF-G/EF-2 subfamily.

The protein resides in the mitochondrion. Its function is as follows. Mitochondrial GTPase that mediates the disassembly of ribosomes from messenger RNA at the termination of mitochondrial protein biosynthesis. Not involved in the GTP-dependent ribosomal translocation step during translation elongation. This chain is Ribosome-releasing factor 2, mitochondrial, found in Kluyveromyces lactis (strain ATCC 8585 / CBS 2359 / DSM 70799 / NBRC 1267 / NRRL Y-1140 / WM37) (Yeast).